A 122-amino-acid chain; its full sequence is Large ribosomal subunit protein uL14 (122 aa).

The protein belongs to the universal ribosomal protein uL14 family. As to quaternary structure, part of the 50S ribosomal subunit. Forms a cluster with proteins L3 and L19. In the 70S ribosome, L14 and L19 interact and together make contacts with the 16S rRNA in bridges B5 and B8.

Its function is as follows. Binds to 23S rRNA. Forms part of two intersubunit bridges in the 70S ribosome. The polypeptide is Large ribosomal subunit protein uL14 (Coxiella burnetii (strain RSA 331 / Henzerling II)).